The chain runs to 272 residues: Indole-3-glycerol phosphate synthase (272 aa).

This sequence belongs to the TrpC family.

It catalyses the reaction 1-(2-carboxyphenylamino)-1-deoxy-D-ribulose 5-phosphate + H(+) = (1S,2R)-1-C-(indol-3-yl)glycerol 3-phosphate + CO2 + H2O. The protein operates within amino-acid biosynthesis; L-tryptophan biosynthesis; L-tryptophan from chorismate: step 4/5. The protein is Indole-3-glycerol phosphate synthase of Mycobacteroides abscessus (strain ATCC 19977 / DSM 44196 / CCUG 20993 / CIP 104536 / JCM 13569 / NCTC 13031 / TMC 1543 / L948) (Mycobacterium abscessus).